A 232-amino-acid polypeptide reads, in one-letter code: Glutathione S-transferase U10 (232 aa).

A GST N-terminal domain is found at 6–85 (SKVILHGTWI…YIDETWTNSP (80 aa)). Glutathione is bound by residues 16-17 (ST), 42-43 (NK), 56-57 (KI), and 69-70 (ES). Residues 91–226 (DPYERAQVRF…FIQKYRQKCL (136 aa)) form the GST C-terminal domain.

This sequence belongs to the GST superfamily. Tau family.

It localises to the cytoplasm. It is found in the cytosol. The enzyme catalyses RX + glutathione = an S-substituted glutathione + a halide anion + H(+). In terms of biological role, may be involved in the conjugation of reduced glutathione to a wide number of exogenous and endogenous hydrophobic electrophiles and have a detoxification role against certain herbicides. In Arabidopsis thaliana (Mouse-ear cress), this protein is Glutathione S-transferase U10 (GSTU10).